Reading from the N-terminus, the 470-residue chain is Maltose fermentation regulatory protein YPR196W (470 aa).

Residues 8 to 34 constitute a DNA-binding region (zn(2)-C6 fungal-type); that stretch reads CDCCRVRRVKCDRNRPCDRCRQRNLRC. The Nuclear localization signal signature appears at 41–49; that stretch reads RKRGPKSIG.

This sequence belongs to the MAL13 family.

It is found in the nucleus. In terms of biological role, may regulate the transcription of maltase and maltose permease genes. In Saccharomyces cerevisiae (strain ATCC 204508 / S288c) (Baker's yeast), this protein is Maltose fermentation regulatory protein YPR196W.